A 461-amino-acid polypeptide reads, in one-letter code: MAEAAFHPPRRKRRVFECYQAPFPVGPGAGDFRMCRADMVNNCVVVRSPEDMDQLYNKGYFGKGILSRSRPVYSISDPSLVSKWQGANLNVPIITSKKYQQRVQWAKSALQEQGFDGCSVTKILENYTRPLEFPFLEKGGAEQTGDSCDTVCPNTENTELSGQSSTDTGNIATSSPECQKEVCQKAYAEGDPASDSMVGSKEQEPADVKETAQTSCQMHGSCMHCGCKAKGAPDRESCNMAKSRERAPEYVLVQEEEESSLCPEEGSAREQENFVKKEKLVCRRNPFRIFEYLQLSLEEAFFLVYALGCLTVYYGEEPLTILKLWEIFSEVKPSFKTTYMAYHYFRSKGWVPKVGLKYGTDLLLYRKGPPFYHASYSVIAELVDDNFEGSLRRPLSWMSLSGLNRTTVNASKELLLCYLIKPSDMTEEEMATPECLKRIKVQELIVTRWVSSRERSEQDDL.

Disordered stretches follow at residues 140–176 (GAEQ…TSSP) and 190–210 (GDPA…DVKE). A compositionally biased stretch (polar residues) spans 144–176 (TGDSCDTVCPNTENTELSGQSSTDTGNIATSSP). Residues 201 to 210 (KEQEPADVKE) are compositionally biased toward basic and acidic residues. Active-site residues include Y365, H373, and K412.

This sequence belongs to the tRNA-intron endonuclease family. As to quaternary structure, tRNA splicing endonuclease is a heterotetramer composed of SEN2, SEN15, SEN34/LENG5 and SEN54.

It is found in the nucleus. The catalysed reaction is pretRNA = a 3'-half-tRNA molecule with a 5'-OH end + a 5'-half-tRNA molecule with a 2',3'-cyclic phosphate end + an intron with a 2',3'-cyclic phosphate and a 5'-hydroxyl terminus.. Functionally, constitutes one of the two catalytic subunit of the tRNA-splicing endonuclease complex, a complex responsible for identification and cleavage of the splice sites in pre-tRNA. It cleaves pre-tRNA at the 5'- and 3'-splice sites to release the intron. The products are an intron and two tRNA half-molecules bearing 2',3'-cyclic phosphate and 5'-OH termini. There are no conserved sequences at the splice sites, but the intron is invariably located at the same site in the gene, placing the splice sites an invariant distance from the constant structural features of the tRNA body. Probably carries the active site for 5'-splice site cleavage. The tRNA splicing endonuclease is also involved in mRNA processing via its association with pre-mRNA 3'-end processing factors, establishing a link between pre-tRNA splicing and pre-mRNA 3'-end formation, suggesting that the endonuclease subunits function in multiple RNA-processing events. This is tRNA-splicing endonuclease subunit Sen2 (TSEN2) from Gallus gallus (Chicken).